A 239-amino-acid chain; its full sequence is Pyridoxal 5'-phosphate synthase subunit PdxS (239 aa).

A D-ribose 5-phosphate-binding site is contributed by Asp21. Lys78 functions as the Schiff-base intermediate with D-ribose 5-phosphate in the catalytic mechanism. D-ribose 5-phosphate is bound at residue Gly150. D-glyceraldehyde 3-phosphate is bound at residue Arg162. D-ribose 5-phosphate contacts are provided by residues Gly211 and 232–233 (GS).

Belongs to the PdxS/SNZ family. As to quaternary structure, in the presence of PdxT, forms a dodecamer of heterodimers.

The enzyme catalyses aldehydo-D-ribose 5-phosphate + D-glyceraldehyde 3-phosphate + L-glutamine = pyridoxal 5'-phosphate + L-glutamate + phosphate + 3 H2O + H(+). Its pathway is cofactor biosynthesis; pyridoxal 5'-phosphate biosynthesis. Functionally, catalyzes the formation of pyridoxal 5'-phosphate from ribose 5-phosphate (RBP), glyceraldehyde 3-phosphate (G3P) and ammonia. The ammonia is provided by the PdxT subunit. Can also use ribulose 5-phosphate and dihydroxyacetone phosphate as substrates, resulting from enzyme-catalyzed isomerization of RBP and G3P, respectively. The sequence is that of Pyridoxal 5'-phosphate synthase subunit PdxS from Francisella tularensis.